A 362-amino-acid polypeptide reads, in one-letter code: DNA replication and repair protein RecF (362 aa).

31-38 (GDNAAGKT) contacts ATP.

This sequence belongs to the RecF family.

It localises to the cytoplasm. In terms of biological role, the RecF protein is involved in DNA metabolism; it is required for DNA replication and normal SOS inducibility. RecF binds preferentially to single-stranded, linear DNA. It also seems to bind ATP. This chain is DNA replication and repair protein RecF, found in Hydrogenovibrio crunogenus (strain DSM 25203 / XCL-2) (Thiomicrospira crunogena).